The primary structure comprises 135 residues: C-type lectin APL (135 aa).

4 cysteine pairs are disulfide-bonded: Cys3/Cys14, Cys31/Cys131, Cys38/Cys133, and Cys106/Cys123. In terms of domain architecture, C-type lectin spans 10-132 (MNGLCYKIFD…CESKNAFLCQ (123 aa)). Ca(2+) is bound by residues Gln96, Asp98, Glu104, Asn119, and Asp120. The Galactose-binding signature appears at 96 to 98 (QPD).

It belongs to the true venom lectin family. As to quaternary structure, homodimer; disulfide-linked. As to expression, expressed by the venom gland.

It localises to the secreted. Its function is as follows. Beta-galactoside lectin that agglutinates rabbit and human erythrocytes in a calcium-dependent fashion (MHC is 0.21 ug/ml on rabbit erythrocytes). Galactose (15 mM), lactose (20 mM), rhamnose (20 mM) and EGTA strongly inhibit this activity. In Agkistrodon piscivorus piscivorus (Eastern cottonmouth), this protein is C-type lectin APL.